A 165-amino-acid polypeptide reads, in one-letter code: CDP-archaeol synthase (165 aa).

Transmembrane regions (helical) follow at residues 41 to 61, 72 to 92, 103 to 123, and 127 to 147; these read GLICGVLAGVLIGLVQIWLVG, ILSVTLLALGALLGDMGKSFI, AWPVADQYDLVVGAFLLTIIF, and WFFAVVTLPVLIAILVITPVL.

Belongs to the CDP-archaeol synthase family. Requires Mg(2+) as cofactor.

The protein localises to the cell membrane. It carries out the reaction 2,3-bis-O-(geranylgeranyl)-sn-glycerol 1-phosphate + CTP + H(+) = CDP-2,3-bis-O-(geranylgeranyl)-sn-glycerol + diphosphate. It participates in membrane lipid metabolism; glycerophospholipid metabolism. Catalyzes the formation of CDP-2,3-bis-(O-geranylgeranyl)-sn-glycerol (CDP-archaeol) from 2,3-bis-(O-geranylgeranyl)-sn-glycerol 1-phosphate (DGGGP) and CTP. This reaction is the third ether-bond-formation step in the biosynthesis of archaeal membrane lipids. This chain is CDP-archaeol synthase, found in Methanoregula boonei (strain DSM 21154 / JCM 14090 / 6A8).